The primary structure comprises 533 residues: Metal transporter nramp1 homolog (533 aa).

The interval 1 to 33 is disordered; it reads MTPRIESEESAPLVNKNNNNNNDNNNNNNVDEE. The Cytoplasmic portion of the chain corresponds to 1–68; sequence MTPRIESEES…PNIDKPDSKW (68 aa). A compositionally biased stretch (low complexity) spans 14–29; that stretch reads VNKNNNNNNDNNNNNN. A helical transmembrane segment spans residues 69 to 89; it reads INFKTLWAFTGPGFLMSIAYL. Over 90–101 the chain is Extracellular; it reads DPGNLESDIQAG. A helical membrane pass occupies residues 102 to 122; that stretch reads AMAGYQLLWVLFWSTVIGFWL. At 123–158 the chain is on the cytoplasmic side; the sequence is QMLASRLGVVTGKHLAEHCREQYPKTPRLLLWLMTE. The chain crosses the membrane as a helical span at residues 159-179; the sequence is LAIIGSDIQEVIGTAIALQIL. The Extracellular segment spans residues 180–182; the sequence is SNG. Residues 183 to 203 form a helical membrane-spanning segment; sequence HIPLWAGVLFTAADTFTFLFL. At 204-212 the chain is on the cytoplasmic side; that stretch reads EKYGIRKLE. The chain crosses the membrane as a helical span at residues 213-233; sequence AFFCSLIAIMAISFGVEYIIS. The Extracellular segment spans residues 234–256; it reads KPDQIEVVKGVFIPLCSQNNISQ. N-linked (GlcNAc...) asparagine glycosylation occurs at Asn253. The chain crosses the membrane as a helical span at residues 257-277; that stretch reads AVGILGAVVMPHNIYLHSALV. The Cytoplasmic portion of the chain corresponds to 278–302; sequence QSREIDRKSETQVKIANKYNRLESA. Residues 303-323 traverse the membrane as a helical segment; that stretch reads FALIISFIINLLLVSVFAKGF. The Extracellular portion of the chain corresponds to 324–348; the sequence is YGETTEIGLSSAADFLMDKYGKVAK. The helical transmembrane segment at 349 to 368 threads the bilayer; it reads YIWAIGLFSAGQCSTMTGTY. At 369 to 387 the chain is on the cytoplasmic side; that stretch reads SGQFVMEGFLKLKIAPWKR. A helical transmembrane segment spans residues 388–408; it reads LLITRCTAIVPAMVVAILSTS. Residues 409 to 415 are Extracellular-facing; the sequence is HLDSLDQ. Residues 416–436 form a helical membrane-spanning segment; it reads WLNILQSIQLPFAVVPVLLFT. The Cytoplasmic segment spans residues 437 to 457; that stretch reads SSEKIMGSKFKNHWLNNQFVR. A helical membrane pass occupies residues 458–478; it reads FLSLLIIAINIYLIITFSMQI. Residues 479 to 481 are Extracellular-facing; that stretch reads SES. A helical transmembrane segment spans residues 482–502; that stretch reads AWMISIVSISFFFYFIFIVYL. The Cytoplasmic segment spans residues 503 to 533; it reads SMGQENFNSMTKKIKNLFNNNSNQTYNNINY.

This sequence belongs to the NRAMP family.

The protein resides in the membrane. Depletes iron from the phagolysosome in an ATP-dependent process. May rather act as a symporter of protons and metal cations in an ATP-dependent process. Nramp1 overexpression protected cells from L.pneumophila infection. The chain is Metal transporter nramp1 homolog (nramp1) from Dictyostelium discoideum (Social amoeba).